The primary structure comprises 454 residues: Bifunctional protein GlmU (454 aa).

A pyrophosphorylase region spans residues 1–231; sequence MDRATVSLIV…EAETLGVNTR (231 aa). Residues 11 to 14, Lys25, Gln78, 83 to 84, 106 to 108, Gly143, Glu157, Asn172, and Asn229 each bind UDP-N-acetyl-alpha-D-glucosamine; these read LAAG, GT, and YGD. Residue Asp108 participates in Mg(2+) binding. Position 229 (Asn229) interacts with Mg(2+). The linker stretch occupies residues 232-252; that stretch reads AQLAEAEAEFQKRARAAALED. Positions 253-454 are N-acetyltransferase; it reads GVTLTAPDTV…AKAAKKKEAP (202 aa). Residues Arg318 and Lys336 each coordinate UDP-N-acetyl-alpha-D-glucosamine. The Proton acceptor role is filled by His348. Residues Tyr351 and Asn362 each contribute to the UDP-N-acetyl-alpha-D-glucosamine site. Acetyl-CoA contacts are provided by residues Ala365, 371 to 372, Ser390, Ser408, and Arg425; that span reads NY.

It in the N-terminal section; belongs to the N-acetylglucosamine-1-phosphate uridyltransferase family. The protein in the C-terminal section; belongs to the transferase hexapeptide repeat family. Homotrimer. Mg(2+) serves as cofactor.

It is found in the cytoplasm. The enzyme catalyses alpha-D-glucosamine 1-phosphate + acetyl-CoA = N-acetyl-alpha-D-glucosamine 1-phosphate + CoA + H(+). The catalysed reaction is N-acetyl-alpha-D-glucosamine 1-phosphate + UTP + H(+) = UDP-N-acetyl-alpha-D-glucosamine + diphosphate. Its pathway is nucleotide-sugar biosynthesis; UDP-N-acetyl-alpha-D-glucosamine biosynthesis; N-acetyl-alpha-D-glucosamine 1-phosphate from alpha-D-glucosamine 6-phosphate (route II): step 2/2. It participates in nucleotide-sugar biosynthesis; UDP-N-acetyl-alpha-D-glucosamine biosynthesis; UDP-N-acetyl-alpha-D-glucosamine from N-acetyl-alpha-D-glucosamine 1-phosphate: step 1/1. It functions in the pathway bacterial outer membrane biogenesis; LPS lipid A biosynthesis. Functionally, catalyzes the last two sequential reactions in the de novo biosynthetic pathway for UDP-N-acetylglucosamine (UDP-GlcNAc). The C-terminal domain catalyzes the transfer of acetyl group from acetyl coenzyme A to glucosamine-1-phosphate (GlcN-1-P) to produce N-acetylglucosamine-1-phosphate (GlcNAc-1-P), which is converted into UDP-GlcNAc by the transfer of uridine 5-monophosphate (from uridine 5-triphosphate), a reaction catalyzed by the N-terminal domain. The protein is Bifunctional protein GlmU of Cereibacter sphaeroides (strain ATCC 17023 / DSM 158 / JCM 6121 / CCUG 31486 / LMG 2827 / NBRC 12203 / NCIMB 8253 / ATH 2.4.1.) (Rhodobacter sphaeroides).